The primary structure comprises 87 residues: Sec-independent protein translocase protein TatA (87 aa).

A helical transmembrane segment spans residues 1–21 (MGSFSITHWLILLVVVVVVFG). Residues 56–87 (VLDHDAGTNPPNITGTQSDTTSANKVDDTHNV) form a disordered region. Residues 64 to 79 (NPPNITGTQSDTTSAN) show a composition bias toward polar residues.

The protein belongs to the TatA/E family. In terms of assembly, the Tat system comprises two distinct complexes: a TatABC complex, containing multiple copies of TatA, TatB and TatC subunits, and a separate TatA complex, containing only TatA subunits. Substrates initially bind to the TatABC complex, which probably triggers association of the separate TatA complex to form the active translocon.

The protein resides in the cell inner membrane. In terms of biological role, part of the twin-arginine translocation (Tat) system that transports large folded proteins containing a characteristic twin-arginine motif in their signal peptide across membranes. TatA could form the protein-conducting channel of the Tat system. This chain is Sec-independent protein translocase protein TatA, found in Psychrobacter arcticus (strain DSM 17307 / VKM B-2377 / 273-4).